Here is a 293-residue protein sequence, read N- to C-terminus: 4-diphosphocytidyl-2-C-methyl-D-erythritol kinase (293 aa).

Residue lysine 16 is part of the active site. 99–109 contributes to the ATP binding site; it reads PMGAGLGGGSS. Residue aspartate 141 is part of the active site.

The protein belongs to the GHMP kinase family. IspE subfamily.

It catalyses the reaction 4-CDP-2-C-methyl-D-erythritol + ATP = 4-CDP-2-C-methyl-D-erythritol 2-phosphate + ADP + H(+). The protein operates within isoprenoid biosynthesis; isopentenyl diphosphate biosynthesis via DXP pathway; isopentenyl diphosphate from 1-deoxy-D-xylulose 5-phosphate: step 3/6. In terms of biological role, catalyzes the phosphorylation of the position 2 hydroxy group of 4-diphosphocytidyl-2C-methyl-D-erythritol. The protein is 4-diphosphocytidyl-2-C-methyl-D-erythritol kinase of Burkholderia lata (strain ATCC 17760 / DSM 23089 / LMG 22485 / NCIMB 9086 / R18194 / 383).